The chain runs to 494 residues: Glutamyl-tRNA(Gln) amidotransferase subunit A (494 aa).

Catalysis depends on charge relay system residues Lys-79 and Ser-159. Ser-183 functions as the Acyl-ester intermediate in the catalytic mechanism.

This sequence belongs to the amidase family. GatA subfamily. As to quaternary structure, heterotrimer of A, B and C subunits.

The catalysed reaction is L-glutamyl-tRNA(Gln) + L-glutamine + ATP + H2O = L-glutaminyl-tRNA(Gln) + L-glutamate + ADP + phosphate + H(+). In terms of biological role, allows the formation of correctly charged Gln-tRNA(Gln) through the transamidation of misacylated Glu-tRNA(Gln) in organisms which lack glutaminyl-tRNA synthetase. The reaction takes place in the presence of glutamine and ATP through an activated gamma-phospho-Glu-tRNA(Gln). In Bartonella henselae (strain ATCC 49882 / DSM 28221 / CCUG 30454 / Houston 1) (Rochalimaea henselae), this protein is Glutamyl-tRNA(Gln) amidotransferase subunit A.